Reading from the N-terminus, the 1161-residue chain is Hamartin (1161 aa).

Lysine 30 participates in a covalent cross-link: Glycyl lysine isopeptide (Lys-Gly) (interchain with G-Cter in ubiquitin). Disordered regions lie at residues 296-336 and 353-591; these read PYVD…PSTR and CGMT…QRGV. Low complexity predominate over residues 303–336; the sequence is SYGGSTSTPSSSSRLMLFSPPGQLPQSLSSPSTR. The segment covering 393–402 has biased composition (pro residues); it reads TSPPPAPPCP. Positions 403-784 are mediates interaction with WDR45B; the sequence is QDDCVHGSAA…QIRQLQHDRE (382 aa). Positions 471-484 are enriched in basic and acidic residues; it reads EKDKEEAAISKELS. Residues serine 484, serine 502, serine 508, serine 518, serine 592, and serine 595 each carry the phosphoserine modification. The span at 509 to 529 shows a compositional bias: polar residues; the sequence is LSGSQRKTHSAASGTQGSSVN. Coiled coils occupy residues 721–849, 879–917, and 967–991; these read IRAA…NRQL, TAYR…AKKD, and EKDG…ERLD. 2 disordered regions span residues 1003–1077 and 1092–1161; these read GHNE…SLPS and NKSE…PEHS. Positions 1004 to 1017 are enriched in basic and acidic residues; it reads HNEEASGHNGETRT. A compositionally biased stretch (low complexity) spans 1026-1043; it reads SCGGRVTGGSSSSSSELS. A compositionally biased stretch (polar residues) spans 1064–1077; sequence PSSSIPTTVGSLPS. Serine 1094 carries the post-translational modification Phosphoserine. The span at 1103-1113 shows a compositional bias: low complexity; it reads VTMSSSSLSET. Basic and acidic residues-rich tracts occupy residues 1114-1124 and 1152-1161; these read LKTELGKDSGT and DYNETHPEHS.

As to quaternary structure, component of the TSC-TBC complex (also named Rhebulator complex), composed of 2 molecules of TSC1, 2 molecules of TSC2 and 1 molecule of TBC1D7. Probably forms a complex composed of chaperones HSP90 and HSP70, co-chaperones STIP1/HOP, CDC37, PPP5C, PTGES3/p23, TSC1 and client protein TSC2. Forms a complex composed of chaperones HSP90 and HSP70, co-chaperones CDC37, PPP5C, TSC1 and client protein TSC2, CDK4, AKT, RAF1 and NR3C1; this complex does not contain co-chaperones STIP1/HOP and PTGES3/p23. Forms a complex containing HSP90AA1, TSC1 and TSC2; TSC1 is required to recruit TCS2 to the complex. Interacts (via C-terminus) with the closed form of HSP90AA1 (via the middle domain and TPR repeat-binding motif). Interacts with DOCK7. Interacts with FBXW5. Interacts with WDR45B. Interacts with RPAP3 and URI1. Phosphorylation at Ser-502 does not affect interaction with TSC2. Post-translationally, 'Lys-63'-linked ubiquitinated at Lys-30 by PELI1; the ubiquitination promotes TSC1/TSC2 complex stability.

Its subcellular location is the lysosome membrane. The protein localises to the cytoplasm. It is found in the cytosol. Its function is as follows. Non-catalytic component of the TSC-TBC complex, a multiprotein complex that acts as a negative regulator of the canonical mTORC1 complex, an evolutionarily conserved central nutrient sensor that stimulates anabolic reactions and macromolecule biosynthesis to promote cellular biomass generation and growth. The TSC-TBC complex acts as a GTPase-activating protein (GAP) for the small GTPase RHEB, a direct activator of the protein kinase activity of mTORC1. In absence of nutrients, the TSC-TBC complex inhibits mTORC1, thereby preventing phosphorylation of ribosomal protein S6 kinase (RPS6KB1 and RPS6KB2) and EIF4EBP1 (4E-BP1) by the mTORC1 signaling. The TSC-TBC complex is inactivated in response to nutrients, relieving inhibition of mTORC1. Within the TSC-TBC complex, TSC1 stabilizes TSC2 and prevents TSC2 self-aggregation. Involved in microtubule-mediated protein transport via its ability to regulate mTORC1 signaling. Also acts as a co-chaperone for HSP90AA1 facilitating HSP90AA1 chaperoning of protein clients such as kinases, TSC2 and glucocorticoid receptor NR3C1. Increases ATP binding to HSP90AA1 and inhibits HSP90AA1 ATPase activity. Competes with the activating co-chaperone AHSA1 for binding to HSP90AA1, thereby providing a reciprocal regulatory mechanism for chaperoning of client proteins. Recruits TSC2 to HSP90AA1 and stabilizes TSC2 by preventing the interaction between TSC2 and ubiquitin ligase HERC1. This is Hamartin from Mus musculus (Mouse).